We begin with the raw amino-acid sequence, 449 residues long: Putative F-box/FBD/LRR-repeat protein At3g49480 (449 aa).

The F-box domain occupies 11–59; the sequence is EDRISSLPDDLLVKILLCVPTKDAAATTFLSKRWRFVWRMLPRLNYIET. 6 LRR repeats span residues 60–91, 153–180, 182–206, 235–260, 275–302, and 327–352; these read TSDV…WIDL, RLTL…DLFC, VYKD…KVTR, FRED…HIFD, VTVV…ALSP, and SEYD…LVDS. In terms of domain architecture, FBD spans 364-412; the sequence is WNQPSSIPRCLSSHLEIFEWDGYVGREDEKKIIRYILENSKYLKTAGIS.

In Arabidopsis thaliana (Mouse-ear cress), this protein is Putative F-box/FBD/LRR-repeat protein At3g49480.